Reading from the N-terminus, the 60-residue chain is Large ribosomal subunit protein uL30 (60 aa).

This sequence belongs to the universal ribosomal protein uL30 family. As to quaternary structure, part of the 50S ribosomal subunit.

The protein is Large ribosomal subunit protein uL30 of Leifsonia xyli subsp. xyli (strain CTCB07).